A 435-amino-acid polypeptide reads, in one-letter code: Phosphomethylpyrimidine synthase (435 aa).

Substrate contacts are provided by residues N67, M96, Y125, H163, 185–187 (SRG), 226–229 (DGLR), and E265. H269 is a binding site for Zn(2+). Residue Y292 coordinates substrate. H333 is a Zn(2+) binding site. The [4Fe-4S] cluster site is built by C408, C411, and C415.

It belongs to the ThiC family. The cofactor is [4Fe-4S] cluster.

It carries out the reaction 5-amino-1-(5-phospho-beta-D-ribosyl)imidazole + S-adenosyl-L-methionine = 4-amino-2-methyl-5-(phosphooxymethyl)pyrimidine + CO + 5'-deoxyadenosine + formate + L-methionine + 3 H(+). It functions in the pathway cofactor biosynthesis; thiamine diphosphate biosynthesis. Catalyzes the synthesis of the hydroxymethylpyrimidine phosphate (HMP-P) moiety of thiamine from aminoimidazole ribotide (AIR) in a radical S-adenosyl-L-methionine (SAM)-dependent reaction. The chain is Phosphomethylpyrimidine synthase from Thermus thermophilus (strain ATCC 27634 / DSM 579 / HB8).